We begin with the raw amino-acid sequence, 217 residues long: GTP cyclohydrolase-2 (217 aa).

50 to 54 (RIHSE) contributes to the GTP binding site. Zn(2+)-binding residues include Cys-55, Cys-66, and Cys-68. Residues Gln-71, 93 to 95 (EGR), and Thr-115 each bind GTP. Asp-127 acts as the Proton acceptor in catalysis. The Nucleophile role is filled by Arg-129. Residues Thr-150 and Lys-155 each contribute to the GTP site.

Belongs to the GTP cyclohydrolase II family. The cofactor is Zn(2+).

It carries out the reaction GTP + 4 H2O = 2,5-diamino-6-hydroxy-4-(5-phosphoribosylamino)-pyrimidine + formate + 2 phosphate + 3 H(+). It functions in the pathway cofactor biosynthesis; riboflavin biosynthesis; 5-amino-6-(D-ribitylamino)uracil from GTP: step 1/4. Its function is as follows. Catalyzes the conversion of GTP to 2,5-diamino-6-ribosylamino-4(3H)-pyrimidinone 5'-phosphate (DARP), formate and pyrophosphate. This is GTP cyclohydrolase-2 from Actinobacillus succinogenes (strain ATCC 55618 / DSM 22257 / CCUG 43843 / 130Z).